Consider the following 357-residue polypeptide: Probable 3'(2'),5'-bisphosphate nucleotidase 3 (357 aa).

The active-site Proton acceptor is the D46. E71, D135, and I137 together coordinate Mg(2+). Residue T140 is the Proton acceptor of the active site. The adenosine 3',5'-bisphosphate site is built by T140, S256, K259, and R273. Positions 256, 259, and 273 each coordinate AMP.

The protein belongs to the inositol monophosphatase superfamily. Mg(2+) is required as a cofactor.

It carries out the reaction 3'-phosphoadenylyl sulfate + H2O = adenosine 5'-phosphosulfate + phosphate. The enzyme catalyses adenosine 3',5'-bisphosphate + H2O = AMP + phosphate. The catalysed reaction is adenosine 2',5'-bisphosphate + H2O = AMP + phosphate. It catalyses the reaction 1D-myo-inositol 1,4-bisphosphate + H2O = 1D-myo-inositol 4-phosphate + phosphate. It carries out the reaction 1D-myo-inositol 1,3,4-trisphosphate + H2O = 1D-myo-inositol 3,4-bisphosphate + phosphate. The protein operates within signal transduction; phosphatidylinositol signaling pathway. Phosphatase that converts adenosine 3'-phosphate 5'-phosphosulfate (PAPS) to adenosine 5'-phosphosulfate (APS) and 3'(2')-phosphoadenosine 5'-phosphate (PAP) to AMP. Is also able to hydrolyze inositol 1,4-bisphosphate and inositol 1,3,4-trisphosphate. This Arabidopsis thaliana (Mouse-ear cress) protein is Probable 3'(2'),5'-bisphosphate nucleotidase 3 (SAL3).